A 453-amino-acid chain; its full sequence is MADRQHFPSAITEAVSSNTACPDTGPKAETTNIFLLLQRNITIESSKHVFSSIVEYILILTLMFAFSAILYVIYKSYISPVFYKKELTEVGFDHIPQGPDKGRRISRAQASRRMGSKLPPPYPNGWFAVAETRELKVGSVLSIDALGQNLCVYRGEDGLARCVDAYCPHLGANLAVGGTVRGSCIECPFHKWRFNAAGTCVSLPGSDIAPKGVSIRTWCVVETDGAIWIWHDAEGREPLWEITDPPELKDFGYRGRNEFEVSAHIQEIPENGADVPHLNAVHSSSLLSDLGERYPVLHEIIGRHVWNADWTKSDDHTSLMHITQEYKVLKYDLARIDVKVTQIGPGHVRLFLKTSVGPFYIAQSVTPLGPLLQKVIHRVYSPAYNAPVGAFLVRCEAYMFERDVTIWNSKRFVSAPAYVKTDKTIRTFRNWFGQFYSEHSLSFRDALQNPLDW.

Residues 53 to 73 (IVEYILILTLMFAFSAILYVI) form a helical membrane-spanning segment. The Rieske domain occupies 126-229 (WFAVAETREL…VVETDGAIWI (104 aa)). 4 residues coordinate [2Fe-2S] cluster: Cys-167, His-169, Cys-187, and His-190.

Belongs to the cholesterol 7-desaturase family. The cofactor is [2Fe-2S] cluster.

The protein resides in the membrane. It catalyses the reaction cholesterol + NADPH + O2 + H(+) = 7-dehydrocholesterol + NADP(+) + 2 H2O. The catalysed reaction is cholesterol + NADH + O2 + H(+) = 7-dehydrocholesterol + NAD(+) + 2 H2O. It functions in the pathway steroid hormone biosynthesis; dafachronic acid biosynthesis. Catalyzes the production of 7-dehydrocholesterol (7-DHC or cholesta-5,7-dien-3beta-ol) by inserting a double bond (desaturating) at the C7-C8 single bond of cholesterol. Essential regulator of steroid biosynthesis as this reaction is the first step in the synthesis of the steroid hormone Delta(7)-dafachronic acid. The sequence is that of Cholesterol 7-desaturase nvd from Bombyx mori (Silk moth).